Here is a 263-residue protein sequence, read N- to C-terminus: Endonuclease 8 (263 aa).

The Schiff-base intermediate with DNA role is filled by Pro-2. The Proton donor role is filled by Glu-3. The active-site Proton donor; for beta-elimination activity is Lys-53. Gln-70, Arg-125, and Asn-169 together coordinate DNA. The segment at 229–263 (KVFHRDGEPCERCGGIIEKTTLSSRPFYWCPGCQH) adopts an FPG-type zinc-finger fold. Catalysis depends on Arg-253, which acts as the Proton donor; for delta-elimination activity.

This sequence belongs to the FPG family. Requires Zn(2+) as cofactor.

The enzyme catalyses 2'-deoxyribonucleotide-(2'-deoxyribose 5'-phosphate)-2'-deoxyribonucleotide-DNA = a 3'-end 2'-deoxyribonucleotide-(2,3-dehydro-2,3-deoxyribose 5'-phosphate)-DNA + a 5'-end 5'-phospho-2'-deoxyribonucleoside-DNA + H(+). Involved in base excision repair of DNA damaged by oxidation or by mutagenic agents. Acts as a DNA glycosylase that recognizes and removes damaged bases. Has a preference for oxidized pyrimidines, such as thymine glycol, 5,6-dihydrouracil and 5,6-dihydrothymine. Has AP (apurinic/apyrimidinic) lyase activity and introduces nicks in the DNA strand. Cleaves the DNA backbone by beta-delta elimination to generate a single-strand break at the site of the removed base with both 3'- and 5'-phosphates. The protein is Endonuclease 8 of Escherichia coli O6:K15:H31 (strain 536 / UPEC).